A 348-amino-acid chain; its full sequence is Hereditary hemochromatosis protein homolog (348 aa).

The signal sequence occupies residues 1–22 (MGPRARPALFFLILLRTVAAQG). The interval 23 to 114 (RPPRSHSLRY…IMDNHNHSKE (92 aa)) is alpha-1. Topologically, residues 23–306 (RPPRSHSLRY…WEPSLSNTLV (284 aa)) are extracellular. N-linked (GlcNAc...) asparagine glycosylation is found at Asn110, Asn130, and Asn234. The interval 115–205 (SHTLQVILGC…ELGRGVLDQQ (91 aa)) is alpha-2. 2 disulfide bridges follow: Cys124–Cys187 and Cys225–Cys282. The interval 206–297 (VPPLVKVTHH…GLDQPLTATW (92 aa)) is alpha-3. The Ig-like C1-type domain maps to 207–296 (PPLVKVTHHV…PGLDQPLTAT (90 aa)). Residues 298–306 (EPSLSNTLV) form a connecting peptide region. A helical transmembrane segment spans residues 307–330 (TGVISGIAVCVIIFLIGILFRILR). Topologically, residues 331 to 348 (KRQASRGAMGDYVLAECE) are cytoplasmic.

The protein belongs to the MHC class I family. In terms of assembly, binds TFR through the extracellular domain in a pH-dependent manner.

Its subcellular location is the cell membrane. Its function is as follows. Binds to transferrin receptor (TFR) and reduces its affinity for iron-loaded transferrin. In Rhinoceros unicornis (Greater Indian rhinoceros), this protein is Hereditary hemochromatosis protein homolog (HFE).